Consider the following 248-residue polypeptide: Large ribosomal subunit protein uL10m (248 aa).

A mitochondrion-targeting transit peptide spans 1–24 (MATLIQRSLSLAKSSTPALQFLRF).

Belongs to the universal ribosomal protein uL10 family. In terms of assembly, component of the mitochondrial ribosome large subunit (39S) which comprises a 16S rRNA and about 50 distinct proteins.

It localises to the mitochondrion. This is Large ribosomal subunit protein uL10m (mRpL10) from Drosophila melanogaster (Fruit fly).